Consider the following 311-residue polypeptide: RNA polymerase sigma factor SigA4 (311 aa).

The sigma-70 factor domain-2 stretch occupies residues 78-148 (MLKANLRLVV…TRAIDNHART (71 aa)). The Interaction with polymerase core subunit RpoC motif lies at 102 to 105 (DLIQ). Residues 157 to 234 (EKISRIKKMT…DPKSLEPMDA (78 aa)) form a sigma-70 factor domain-3 region. A sigma-70 factor domain-4 region spans residues 247-304 (WLAHLTEREQQVLQLRFGLHDGEQHTLAEIGRRLNVSRERIRQVEARALQKLRVLSQQ). Positions 273–292 (LAEIGRRLNVSRERIRQVEA) form a DNA-binding region, H-T-H motif.

Belongs to the sigma-70 factor family.

The protein resides in the cytoplasm. In terms of biological role, sigma factors are initiation factors that promote the attachment of RNA polymerase to specific initiation sites and are then released. The chain is RNA polymerase sigma factor SigA4 (sigA4) from Synechococcus elongatus (strain ATCC 33912 / PCC 7942 / FACHB-805) (Anacystis nidulans R2).